A 230-amino-acid polypeptide reads, in one-letter code: MDSIINALTSNNFQRTNTPISKPLVVHAVAGAGKTTLIQNLLPEHPNLAAQTAGSPQTPNLTGAFIRKLTCPESNKINLLDEYAALQPLKGSWDVVLADPLQHPGLALRPHFIKSVSHRLCPATTRLISKLVCPCTSSRTEESTIQFSGLFEGPLLGTVIALDQTTQALLTAHGAHFLCPTAALGLEFDTVTVVSALPLEEVADKVGLYISLSRHRSQLHVRSPPPHPSH.

The 114-residue stretch at 1–114 (MDSIINALTS…GLALRPHFIK (114 aa)) folds into the (+)RNA virus helicase ATP-binding domain. The region spanning 115-230 (SVSHRLCPAT…VRSPPPHPSH (116 aa)) is the (+)RNA virus helicase C-terminal domain.

It belongs to the Tymovirales TGBp1 protein family. As to quaternary structure, homodimer and homooligomer. Interacts with capsid protein. Interacts with host AGO1; this interaction targets the host protein for degradation, thereby suppressing the antiviral RNA silencing.

The protein resides in the host cytoplasm. Its function is as follows. Transports viral genome to neighboring plant cells directly through plasmosdesmata, without any budding. The movement protein allows efficient cell to cell propagation, by bypassing the host cell wall barrier. Increases plasmodesma size exclusion limit. Acts as a suppressor of RNA-mediated gene silencing, also known as post-transcriptional gene silencing (PTGS), a mechanism of plant viral defense that limits the accumulation of viral RNAs. This is Movement and silencing protein TGBp1 from Plantago asiatica (P1AMV).